The sequence spans 106 residues: Iron-sulfur cluster assembly protein CyaY (106 aa).

The protein belongs to the frataxin family.

Its function is as follows. Involved in iron-sulfur (Fe-S) cluster assembly. May act as a regulator of Fe-S biogenesis. The sequence is that of Iron-sulfur cluster assembly protein CyaY from Yersinia pseudotuberculosis serotype O:3 (strain YPIII).